Consider the following 90-residue polypeptide: Putative F-box protein At5g16285 (90 aa).

Residues 1 to 46 (MRIESLLQHDVVERILERLAVNSLPRFKAVSKQWKSTIESQFFQGK) form the F-box domain.

The polypeptide is Putative F-box protein At5g16285 (Arabidopsis thaliana (Mouse-ear cress)).